A 323-amino-acid chain; its full sequence is HTH-type transcriptional regulator CysB (323 aa).

One can recognise an HTH lysR-type domain in the interval 1–60 (MKMHQLRYIVEIVNQNLNVTEAANALYTSQPGISKQVRLLEDELGLEIFERHGKHIKSIT). The segment at residues 19–38 (VTEAANALYTSQPGISKQVR) is a DNA-binding region (H-T-H motif).

Belongs to the LysR transcriptional regulatory family. Homotetramer.

It localises to the cytoplasm. Its function is as follows. This protein is a positive regulator of gene expression for the cysteine regulon. The inducer for CysB is N-acetylserine. The protein is HTH-type transcriptional regulator CysB (cysB) of Haemophilus influenzae (strain ATCC 51907 / DSM 11121 / KW20 / Rd).